Reading from the N-terminus, the 310-residue chain is UDP-N-acetylenolpyruvoylglucosamine reductase (310 aa).

Residues 30 to 200 (RVGGPAQWLA…VAAEFQLEPG (171 aa)) form the FAD-binding PCMH-type domain. Arg-179 is a catalytic residue. The active-site Proton donor is Ser-230. Glu-300 is a catalytic residue.

Belongs to the MurB family. It depends on FAD as a cofactor.

The protein localises to the cytoplasm. The enzyme catalyses UDP-N-acetyl-alpha-D-muramate + NADP(+) = UDP-N-acetyl-3-O-(1-carboxyvinyl)-alpha-D-glucosamine + NADPH + H(+). The protein operates within cell wall biogenesis; peptidoglycan biosynthesis. Its function is as follows. Cell wall formation. The polypeptide is UDP-N-acetylenolpyruvoylglucosamine reductase (Synechococcus sp. (strain WH7803)).